Consider the following 338-residue polypeptide: Dihydroorotate dehydrogenase (quinone) (338 aa).

Residues 59–63 (AGLDK) and Thr-83 each bind FMN. Lys-63 lines the substrate pocket. 108-112 (NRMGF) lines the substrate pocket. 2 residues coordinate FMN: Asn-136 and Asn-169. Asn-169 lines the substrate pocket. The Nucleophile role is filled by Ser-172. Position 174 (Asn-174) interacts with substrate. The FMN site is built by Lys-214 and Thr-242. 243 to 244 (NT) is a binding site for substrate. FMN is bound by residues Gly-265, Gly-294, and 315-316 (YS).

Belongs to the dihydroorotate dehydrogenase family. Type 2 subfamily. As to quaternary structure, monomer. The cofactor is FMN.

Its subcellular location is the cell membrane. It catalyses the reaction (S)-dihydroorotate + a quinone = orotate + a quinol. Its pathway is pyrimidine metabolism; UMP biosynthesis via de novo pathway; orotate from (S)-dihydroorotate (quinone route): step 1/1. Functionally, catalyzes the conversion of dihydroorotate to orotate with quinone as electron acceptor. This is Dihydroorotate dehydrogenase (quinone) from Azoarcus sp. (strain BH72).